Here is a 589-residue protein sequence, read N- to C-terminus: Bifunctional protein TrpGD (589 aa).

The Glutamine amidotransferase type-1 domain maps to 46–241 (RVIVIDNYDS…LNIQDIQVKK (196 aa)). 99–101 (GPG) lines the L-glutamine pocket. Cys-126 functions as the Nucleophile; for GATase activity in the catalytic mechanism. L-glutamine contacts are provided by residues Gln-130 and 176–177 (SL). Catalysis depends on for GATase activity residues His-215 and Glu-217. The segment at 253-589 (ALKKLVEFED…MDYQKTLGNS (337 aa)) is anthranilate phosphoribosyltransferase.

The protein in the C-terminal section; belongs to the anthranilate phosphoribosyltransferase family. Heterotetramer consisting of two non-identical subunits: a beta subunit (TrpG) and a large alpha subunit (TrpE).

It catalyses the reaction chorismate + L-glutamine = anthranilate + pyruvate + L-glutamate + H(+). The catalysed reaction is N-(5-phospho-beta-D-ribosyl)anthranilate + diphosphate = 5-phospho-alpha-D-ribose 1-diphosphate + anthranilate. It participates in amino-acid biosynthesis; L-tryptophan biosynthesis; L-tryptophan from chorismate: step 1/5. Its pathway is amino-acid biosynthesis; L-tryptophan biosynthesis; L-tryptophan from chorismate: step 2/5. In terms of biological role, part of a heterotetrameric complex that catalyzes the two-step biosynthesis of anthranilate, an intermediate in the biosynthesis of L-tryptophan. In the first step, the glutamine-binding beta subunit (TrpG) of anthranilate synthase (AS) provides the glutamine amidotransferase activity which generates ammonia as a substrate that, along with chorismate, is used in the second step, catalyzed by the large alpha subunit of AS (TrpE) to produce anthranilate. In the absence of TrpG, TrpE can synthesize anthranilate directly from chorismate and high concentrations of ammonia. In addition to synthesizing anthranilate, it also catalyzes the second step of the pathway, the transfer of the phosphoribosyl group of 5-phosphorylribose-1-pyrophosphate (PRPP) to anthranilate. This Thermotoga maritima (strain ATCC 43589 / DSM 3109 / JCM 10099 / NBRC 100826 / MSB8) protein is Bifunctional protein TrpGD (trpGD).